A 71-amino-acid chain; its full sequence is Small ribosomal subunit protein bS21 (71 aa).

Belongs to the bacterial ribosomal protein bS21 family.

The polypeptide is Small ribosomal subunit protein bS21 (Photobacterium profundum (strain SS9)).